Here is a 101-residue protein sequence, read N- to C-terminus: Urinary protein 2 (101 aa).

The signal sequence occupies residues 1 to 21; that stretch reads MGKHILLLPLGLSLLMSSLLA. Positions 22–99 constitute a UPAR/Ly6 domain; that stretch reads LQCFRCTSFD…CSATPFCNMV (78 aa). 5 disulfide bridges follow: C24/C51, C27/C36, C43/C70, C73/C89, and C90/C96. Residues N67 and N74 are each glycosylated (N-linked (GlcNAc...) asparagine).

In terms of processing, N-glycosylated.

It is found in the secreted. The chain is Urinary protein 2 from Rattus norvegicus (Rat).